The chain runs to 648 residues: Chaperone protein DnaK (648 aa).

Phosphothreonine; by autocatalysis is present on threonine 200. Residues 612–631 (QAGAAGAAGAAEGAAQGGAQ) are disordered.

The protein belongs to the heat shock protein 70 family.

Acts as a chaperone. The chain is Chaperone protein DnaK from Burkholderia multivorans (strain ATCC 17616 / 249).